The primary structure comprises 123 residues: Protein Wnt-3 (123 aa).

Ser-1 carries O-palmitoleoyl serine; by PORCN lipidation. Residues Cys-89 and Cys-104 are joined by a disulfide bond. N-linked (GlcNAc...) asparagine glycosylation is present at Asn-90.

This sequence belongs to the Wnt family. In terms of processing, palmitoleoylation is required for efficient binding to frizzled receptors. Depalmitoleoylation leads to Wnt signaling pathway inhibition.

Its subcellular location is the secreted. It is found in the extracellular space. It localises to the extracellular matrix. Ligand for members of the frizzled family of seven transmembrane receptors. Functions in the canonical Wnt signaling pathway that results in activation of transcription factors of the TCF/LEF family. Required for normal embryonic development. This is Protein Wnt-3 (WNT-3) from Eptatretus stoutii (Pacific hagfish).